The sequence spans 566 residues: Proline--tRNA ligase (566 aa).

The protein belongs to the class-II aminoacyl-tRNA synthetase family. ProS type 1 subfamily. Homodimer.

Its subcellular location is the cytoplasm. It catalyses the reaction tRNA(Pro) + L-proline + ATP = L-prolyl-tRNA(Pro) + AMP + diphosphate. In terms of biological role, catalyzes the attachment of proline to tRNA(Pro) in a two-step reaction: proline is first activated by ATP to form Pro-AMP and then transferred to the acceptor end of tRNA(Pro). As ProRS can inadvertently accommodate and process non-cognate amino acids such as alanine and cysteine, to avoid such errors it has two additional distinct editing activities against alanine. One activity is designated as 'pretransfer' editing and involves the tRNA(Pro)-independent hydrolysis of activated Ala-AMP. The other activity is designated 'posttransfer' editing and involves deacylation of mischarged Ala-tRNA(Pro). The misacylated Cys-tRNA(Pro) is not edited by ProRS. This chain is Proline--tRNA ligase, found in Bacillus anthracis (strain A0248).